Consider the following 377-residue polypeptide: Putative glutamate--cysteine ligase 2 (377 aa).

It belongs to the glutamate--cysteine ligase type 2 family. YbdK subfamily.

It carries out the reaction L-cysteine + L-glutamate + ATP = gamma-L-glutamyl-L-cysteine + ADP + phosphate + H(+). Functionally, ATP-dependent carboxylate-amine ligase which exhibits weak glutamate--cysteine ligase activity. This chain is Putative glutamate--cysteine ligase 2, found in Chromobacterium violaceum (strain ATCC 12472 / DSM 30191 / JCM 1249 / CCUG 213 / NBRC 12614 / NCIMB 9131 / NCTC 9757 / MK).